Consider the following 414-residue polypeptide: Probable solanesyl-diphosphate synthase 3, chloroplastic (414 aa).

The segment covering 1-23 (MAAPSSLASSSHLSRRATAAASP) has biased composition (low complexity). The disordered stretch occupies residues 1–36 (MAAPSSLASSSHLSRRATAAASPSIPPPSPPPPPQR). A chloroplast-targeting transit peptide spans 1–72 (MAAPSSLASS…KPGVAAVDVP (72 aa)). Residues 24–35 (SIPPPSPPPPPQ) are compositionally biased toward pro residues. 3 residues coordinate isopentenyl diphosphate: K134, R137, and H172. Residues D179 and D183 each contribute to the Mg(2+) site. R188 provides a ligand contact to an all-trans-polyprenyl diphosphate. R189 lines the isopentenyl diphosphate pocket. An all-trans-polyprenyl diphosphate-binding residues include K265, T266, Q303, and K320.

Belongs to the FPP/GGPP synthase family. In terms of assembly, homodimer. It depends on Mg(2+) as a cofactor.

It is found in the plastid. The protein resides in the chloroplast. The enzyme catalyses 7 isopentenyl diphosphate + (2E)-geranyl diphosphate = all-trans-nonaprenyl diphosphate + 7 diphosphate. Functionally, involved in providing solanesyl diphosphate for plastoquinone-9 (PQ-9) formation. This Oryza sativa subsp. japonica (Rice) protein is Probable solanesyl-diphosphate synthase 3, chloroplastic.